A 303-amino-acid polypeptide reads, in one-letter code: Acetaldehyde dehydrogenase (303 aa).

13-16 is an NAD(+) binding site; it reads SGNI. The active-site Acyl-thioester intermediate is cysteine 128. NAD(+) contacts are provided by residues 159-167 and asparagine 278; that span reads SAGPGTRQN.

Belongs to the acetaldehyde dehydrogenase family.

The enzyme catalyses acetaldehyde + NAD(+) + CoA = acetyl-CoA + NADH + H(+). In Chloroflexus aggregans (strain MD-66 / DSM 9485), this protein is Acetaldehyde dehydrogenase.